A 629-amino-acid polypeptide reads, in one-letter code: tRNA uridine 5-carboxymethylaminomethyl modification enzyme MnmG (629 aa).

FAD-binding positions include 13-18 (GGGHAG), V125, and S180. 273–287 (GPRYCPSIEDKVMRF) provides a ligand contact to NAD(+). Q370 is a binding site for FAD.

It belongs to the MnmG family. Homodimer. Heterotetramer of two MnmE and two MnmG subunits. FAD serves as cofactor.

It localises to the cytoplasm. NAD-binding protein involved in the addition of a carboxymethylaminomethyl (cmnm) group at the wobble position (U34) of certain tRNAs, forming tRNA-cmnm(5)s(2)U34. This chain is tRNA uridine 5-carboxymethylaminomethyl modification enzyme MnmG, found in Salmonella dublin (strain CT_02021853).